The chain runs to 122 residues: UPF0344 protein BPUM_1008 (122 aa).

Transmembrane regions (helical) follow at residues 5–25 (LHIT…ALAG), 33–53 (IVHM…VELY), 60–80 (IPGF…VIGF), and 93–113 (SVTG…LLGL).

Belongs to the UPF0344 family.

It is found in the cell membrane. The polypeptide is UPF0344 protein BPUM_1008 (Bacillus pumilus (strain SAFR-032)).